A 123-amino-acid polypeptide reads, in one-letter code: Proteasome assembly chaperone 4 (123 aa).

Belongs to the PSMG4 family. In terms of assembly, interacts with PSMG3. Associates with alpha subunits of the 20S proteasome.

Functionally, chaperone protein which promotes assembly of the 20S proteasome. This is Proteasome assembly chaperone 4 from Homo sapiens (Human).